Here is a 252-residue protein sequence, read N- to C-terminus: MSRTPIIAGNWKLNMNPKETVEFVNAVKDQLPDPSKVESVICAPAVDLDALLKAAEGSNLHVGAENCYWENSGAFTGETSPAVLKEMGVQYVIIGHSERRDYFHETDEDINKKAKAIFANGLTPILCCGESLETREAGKENEWVVSQIKAGLEGLTSEQVSKLVIAYEPIWAIGTGKTASSDQAEEMCKTIRETVKDLYNEETAENVRIQYGGSVKPANVKELMAKPNIDGGLVGGASLVPDSYLALVNYQD.

10 to 12 serves as a coordination point for substrate; the sequence is NWK. Catalysis depends on His96, which acts as the Electrophile. Glu168 serves as the catalytic Proton acceptor. Residues Gly174, Ser214, and 235–236 contribute to the substrate site; that span reads GG.

The protein belongs to the triosephosphate isomerase family. Homodimer.

Its subcellular location is the cytoplasm. The catalysed reaction is D-glyceraldehyde 3-phosphate = dihydroxyacetone phosphate. It functions in the pathway carbohydrate biosynthesis; gluconeogenesis. Its pathway is carbohydrate degradation; glycolysis; D-glyceraldehyde 3-phosphate from glycerone phosphate: step 1/1. Involved in the gluconeogenesis. Catalyzes stereospecifically the conversion of dihydroxyacetone phosphate (DHAP) to D-glyceraldehyde-3-phosphate (G3P). The polypeptide is Triosephosphate isomerase (Lactobacillus delbrueckii subsp. bulgaricus (strain ATCC 11842 / DSM 20081 / BCRC 10696 / JCM 1002 / NBRC 13953 / NCIMB 11778 / NCTC 12712 / WDCM 00102 / Lb 14)).